The primary structure comprises 406 residues: Phosphorylase b kinase gamma catalytic chain, liver/testis isoform (406 aa).

The 268-residue stretch at 24-291 (YDPKDVIGRG…AEQALQHPFF (268 aa)) folds into the Protein kinase domain. ATP is bound by residues 30–38 (IGRGVSSVV) and Lys-53. The active-site Proton acceptor is Asp-153. Positions 306–330 (QRFRVAVWTVLAAGRVALSAHRIRP) are calmodulin-binding (domain-N). The interval 346-370 (VRRLIDNCAFRLYGHWVKKGEQQNR) is calmodulin-binding (domain-C).

This sequence belongs to the protein kinase superfamily. CAMK Ser/Thr protein kinase family. As to quaternary structure, hexadecamer of 4 heterotetramers, each composed of alpha, beta, gamma, and delta subunits. Alpha (PHKA1 or PHKA2) and beta (PHKB) are regulatory subunits, gamma (PHKG1 or PHKG2) is the catalytic subunit, and delta is calmodulin.

The enzyme catalyses 2 ATP + phosphorylase b = 2 ADP + phosphorylase a.. Its function is as follows. Catalytic subunit of the phosphorylase b kinase (PHK), which mediates the neural and hormonal regulation of glycogen breakdown (glycogenolysis) by phosphorylating and thereby activating glycogen phosphorylase. May regulate glycogeneolysis in the testis. In vitro, phosphorylates PYGM. This chain is Phosphorylase b kinase gamma catalytic chain, liver/testis isoform (PHKG2), found in Bos taurus (Bovine).